Consider the following 386-residue polypeptide: MEEIENQSKRRIVSKKEINELSIYIGGFKYWKFLNEDCKIEVLKYLDYCSRCQLSICSKSDHKLVSITPLYVYEIEISDNERSLHSTSTKDFENIVVRVKFSQFSGYRFEVVFWQVEEDVHIRWFKYFGFKQKSVRSLIWKSCNYYEQSVKFAEKWMKVCNYEFQSINVDMNKYPMKSSTVRSLARCKTIRINATDIATYSWWLEKCPEKLDYLELKTLYSNKDTFTIPTDFLDFSQIKNAGTFYFWCRSAFTDEQFLNLKAKKFGFHCVNITANGINDFIKKWVNGHGVNEFQKALLWSAKLNNSFMIMRGIEFRSWDQTFREQEAEFCSAFNEEFLDGEKIQVYSRIDPYESITIYFSPDTISIIATGHRMTRNKKTFTRYQVP.

Positions lysine 29–glutamate 76 constitute an F-box domain.

This is an uncharacterized protein from Caenorhabditis elegans.